A 54-amino-acid polypeptide reads, in one-letter code: Ribulose bisphosphate carboxylase large chain (54 aa).

The propeptide occupies 1 to 2 (MS). Proline 3 carries the post-translational modification N-acetylproline. Lysine 14 carries the post-translational modification N6,N6,N6-trimethyllysine.

The protein belongs to the RuBisCO large chain family. Type I subfamily. In terms of assembly, heterohexadecamer of 8 large chains and 8 small chains.

The protein resides in the plastid. The protein localises to the chloroplast. The catalysed reaction is 2 (2R)-3-phosphoglycerate + 2 H(+) = D-ribulose 1,5-bisphosphate + CO2 + H2O. It catalyses the reaction D-ribulose 1,5-bisphosphate + O2 = 2-phosphoglycolate + (2R)-3-phosphoglycerate + 2 H(+). Its function is as follows. RuBisCO catalyzes two reactions: the carboxylation of D-ribulose 1,5-bisphosphate, the primary event in carbon dioxide fixation, as well as the oxidative fragmentation of the pentose substrate in the photorespiration process. Both reactions occur simultaneously and in competition at the same active site. This chain is Ribulose bisphosphate carboxylase large chain (rbcL), found in Rhamnus cathartica (Common buckthorn).